Reading from the N-terminus, the 843-residue chain is Protein P (843 aa).

The interval 1 to 177 (MPLSYQHFRK…FCGSPYSWEQ (177 aa)) is terminal protein domain (TP). Positions 178–346 (ELQHGRLVFQ…YCLTHIVNLL (169 aa)) are spacer. Residues 347–690 (EDWGPCTEHG…YLHLYPVARQ (344 aa)) form a polymerase/reverse transcriptase domain (RT) region. Positions 357–600 (EHNIRIPRTP…YSLNFMGYVI (244 aa)) constitute a Reverse transcriptase domain. Mg(2+) contacts are provided by Asp429, Asp551, and Asp552.

Belongs to the hepadnaviridae P protein family.

It carries out the reaction DNA(n) + a 2'-deoxyribonucleoside 5'-triphosphate = DNA(n+1) + diphosphate. It catalyses the reaction Endonucleolytic cleavage to 5'-phosphomonoester.. Its activity is regulated as follows. Activated by host HSP70 and HSP40 in vitro to be able to bind the epsilon loop of the pgRNA. Because deletion of the RNase H region renders the protein partly chaperone-independent, the chaperones may be needed indirectly to relieve occlusion of the RNA-binding site by this domain. Inhibited by several reverse-transcriptase inhibitors: Lamivudine, Adefovir and Entecavir. Multifunctional enzyme that converts the viral RNA genome into dsDNA in viral cytoplasmic capsids. This enzyme displays a DNA polymerase activity that can copy either DNA or RNA templates, and a ribonuclease H (RNase H) activity that cleaves the RNA strand of RNA-DNA heteroduplexes in a partially processive 3'- to 5'-endonucleasic mode. Neo-synthesized pregenomic RNA (pgRNA) are encapsidated together with the P protein, and reverse-transcribed inside the nucleocapsid. Initiation of reverse-transcription occurs first by binding the epsilon loop on the pgRNA genome, and is initiated by protein priming, thereby the 5'-end of (-)DNA is covalently linked to P protein. Partial (+)DNA is synthesized from the (-)DNA template and generates the relaxed circular DNA (RC-DNA) genome. After budding and infection, the RC-DNA migrates in the nucleus, and is converted into a plasmid-like covalently closed circular DNA (cccDNA). The activity of P protein does not seem to be necessary for cccDNA generation, and is presumably released from (+)DNA by host nuclear DNA repair machinery. This chain is Protein P, found in Hepatitis B virus genotype C subtype adr (isolate Japan/Nishioka/1983) (HBV-C).